The sequence spans 855 residues: Inactive rhomboid protein 1 (855 aa).

The disordered stretch occupies residues 1 to 35; it reads MSEARRDSTSSLQRKKPPWLKLDIPSAAPATAEEP. Over 1 to 411 the chain is Cytoplasmic; that stretch reads MSEARRDSTS…HRPFFTYWLT (411 aa). A compositionally biased stretch (low complexity) spans 25–35; the sequence is PSAAPATAEEP. Ser-76 and Ser-176 each carry phosphoserine. Phosphothreonine is present on residues Thr-180 and Thr-183. Ser-390 bears the Phosphoserine mark. Residues 412–432 traverse the membrane as a helical segment; sequence FVHSLVTILAVCIYGIAPVGF. At 433 to 655 the chain is on the lumenal side; sequence SQHETVDSVL…NPEVPDQFYR (223 aa). N-linked (GlcNAc...) asparagine glycosylation occurs at Asn-583. The chain crosses the membrane as a helical span at residues 656-676; it reads LWLSLFLHAGILHCLVSICFQ. At 677–691 the chain is on the cytoplasmic side; it reads MTVLRDLEKLAGWHR. The helical transmembrane segment at 692 to 712 threads the bilayer; it reads IAIIYLLSGVTGNLASAIFLP. Residues 713–714 are Lumenal-facing; the sequence is YR. Residues 715-735 form a helical membrane-spanning segment; it reads AEVGPAGSQFGILACLFVELF. Residues 736–746 lie on the Cytoplasmic side of the membrane; it reads QSWQILARPWR. Residues 747 to 767 traverse the membrane as a helical segment; sequence AFFKLLAVVLFLFTFGLLPWI. The Lumenal segment spans residues 768–772; sequence DNFAH. Residues 773-793 form a helical membrane-spanning segment; that stretch reads ISGFISGLFLSFAFLPYISFG. Residues 794-803 are Cytoplasmic-facing; the sequence is KFDLYRKRCQ. A helical membrane pass occupies residues 804–824; it reads IIVFQVVFLGLLAGLVVLFYV. Residues 825–855 lie on the Lumenal side of the membrane; that stretch reads YPVRCEWCEFLTCIPFTDKFCEKYELDAQLH.

It belongs to the peptidase S54 family. Homodimer, or homooligomer. Interacts with TGFA and HBEGF. Interacts with EGF; may retain EGF in the endoplasmic reticulum and regulates its degradation through the endoplasmic reticulum-associated degradation (ERAD). Interacts (via cytoplasmic N-terminus) with FRMD8/iTAP; this interaction leads to mutual protein stabilization. Interacts with ADAM17/TACE.

The protein localises to the endoplasmic reticulum membrane. It is found in the golgi apparatus membrane. Regulates ADAM17 protease, a sheddase of the epidermal growth factor (EGF) receptor ligands and TNF, thereby plays a role in sleep, cell survival, proliferation, migration and inflammation. Does not exhibit any protease activity on its own. The polypeptide is Inactive rhomboid protein 1 (RHBDF1) (Callithrix jacchus (White-tufted-ear marmoset)).